The sequence spans 144 residues: Large ribosomal subunit protein uL13 (144 aa).

It belongs to the universal ribosomal protein uL13 family. Part of the 50S ribosomal subunit.

This protein is one of the early assembly proteins of the 50S ribosomal subunit, although it is not seen to bind rRNA by itself. It is important during the early stages of 50S assembly. The sequence is that of Large ribosomal subunit protein uL13 from Mycoplasmopsis agalactiae (strain NCTC 10123 / CIP 59.7 / PG2) (Mycoplasma agalactiae).